Consider the following 199-residue polypeptide: dITP/XTP pyrophosphatase (199 aa).

Residue 8 to 13 (SGNAGK) coordinates substrate. The active-site Proton acceptor is the Asp69. Residue Asp69 participates in Mg(2+) binding. Residues Ser70, 154–157 (FGYN), Lys177, and 182–183 (HR) contribute to the substrate site.

This sequence belongs to the HAM1 NTPase family. As to quaternary structure, homodimer. Mg(2+) is required as a cofactor.

The catalysed reaction is XTP + H2O = XMP + diphosphate + H(+). It carries out the reaction dITP + H2O = dIMP + diphosphate + H(+). It catalyses the reaction ITP + H2O = IMP + diphosphate + H(+). Its function is as follows. Pyrophosphatase that catalyzes the hydrolysis of nucleoside triphosphates to their monophosphate derivatives, with a high preference for the non-canonical purine nucleotides XTP (xanthosine triphosphate), dITP (deoxyinosine triphosphate) and ITP. Seems to function as a house-cleaning enzyme that removes non-canonical purine nucleotides from the nucleotide pool, thus preventing their incorporation into DNA/RNA and avoiding chromosomal lesions. The sequence is that of dITP/XTP pyrophosphatase from Xanthomonas axonopodis pv. citri (strain 306).